A 597-amino-acid polypeptide reads, in one-letter code: Arginine--tRNA ligase (597 aa).

The segment covering 23–32 (QAAAARQASQ) has biased composition (low complexity). A disordered region spans residues 23-43 (QAAAARQASQPLDPQLAPASK). Residues 137–147 (PNIAKEMHVGH) carry the 'HIGH' region motif.

This sequence belongs to the class-I aminoacyl-tRNA synthetase family. Monomer.

Its subcellular location is the cytoplasm. It catalyses the reaction tRNA(Arg) + L-arginine + ATP = L-arginyl-tRNA(Arg) + AMP + diphosphate. The protein is Arginine--tRNA ligase of Synechococcus sp. (strain WH7803).